Reading from the N-terminus, the 430-residue chain is DNA repair protein recA homolog 3, mitochondrial (430 aa).

The transit peptide at 1–35 (MARILRNVYSLRSSLFSSELLRRSVVGTSFQLRGF) directs the protein to the mitochondrion. 119–126 (GPEASGKT) provides a ligand contact to ATP. The interval 385–415 (DEAADKETESESEEEDSLRVVVSPDNTDDES) is disordered.

It belongs to the RecA family.

The protein localises to the mitochondrion. Involved in recombination ability and DNA strand transfer activity. This chain is DNA repair protein recA homolog 3, mitochondrial, found in Arabidopsis thaliana (Mouse-ear cress).